The sequence spans 2748 residues: Chalcone synthase cfoA (2748 aa).

Residues 13–511 (RHAGESCEKV…DTVPRTVIGK (499 aa)) are adenylation (A) domain. The Carrier 1 domain maps to 535 to 620 (DLIEALVMAE…AVSTYLHGRL (86 aa)). Ser-579 is subject to O-(pantetheine 4'-phosphoryl)serine. The 433-residue stretch at 641–1073 (VEPIAIVSMA…GTNSHIILEQ (433 aa)) folds into the Ketosynthase family 3 (KS3) domain. Residues Cys-813, His-948, and His-995 each act as for beta-ketoacyl synthase activity in the active site. Residues 1196-1489 (FSGQGSWMPT…ATHGTVDKLL (294 aa)) form the Malonyl-CoA:ACP transacylase (MAT) domain. The dehydratase (DH) domain stretch occupies residues 1561 to 1842 (LGHEMIFNAT…ENSFSMTMTD (282 aa)). Residues 1563–1707 (HEMIFNATSI…GTFQLISQPN (145 aa)) are N-terminal hotdog fold. The PKS/mFAS DH domain maps to 1563–1866 (HEMIFNATSI…LRTWQPTVAG (304 aa)). Catalysis depends on His-1595, which acts as the Proton acceptor; for dehydratase activity. Residues 1722-1866 (AESDVNISEA…LRTWQPTVAG (145 aa)) form a C-terminal hotdog fold region. Asp-1784 acts as the Proton donor; for dehydratase activity in catalysis. The region spanning 2031–2210 (GTVLITGGTG…ALSLAWGPWA (180 aa)) is the Ketoreductase (KR) domain. Residues 2305–2383 (NRHDTLLGLV…ALVEYLLPRI (79 aa)) enclose the Carrier 2 domain. The residue at position 2342 (Ser-2342) is an O-(pantetheine 4'-phosphoryl)serine. The tract at residues 2386–2426 (EPQPEVDTDSDASTTAGDTSVSRDSGKEDELSPSSSVTTLA) is disordered. A compositionally biased stretch (low complexity) spans 2396-2407 (DASTTAGDTSVS). The interval 2519-2742 (VGLSVYSNLA…GAAGEIERWA (224 aa)) is thioester reductase (TE) domain.

In the N-terminal section; belongs to the NRP synthetase family. Pantetheine 4'-phosphate serves as cofactor.

It functions in the pathway secondary metabolite biosynthesis; flavonoid biosynthesis. Hybrid PKS-NRPS synthetase; part of the gene cluster that mediates the biosynthesis of chlorflavonin, a fungal flavonoid with acetolactate synthase inhibitory activity. Within the pathway, the PKS-NRPS cfoA, is responsible for the generation of the key precursor chalcone. The adenylation (A) domain activates benzoic acid or p-hydroxybenzoic acid which are transferred to the thiol group of the pantetheinyl residue of the T domain, and further transferred to the adjacent PKS portion of cfoA. Within the PKS portion of cfoA, benzoic acid or p-hydroxybenzoic acid act as starter units for respectively four malonyl-CoA molecules for elongation by the AT and KS domains. Afterwards, chalcone is cyclized through Claisen condensation and thereby released either spontaneously or catalyzed by the TE domain. Then, a new type of chalcone isomerase, cfoK, catalyzes the conversion of the chalcone into a flavanone by a histidine-mediated oxa-Michael addition mechanism. The desaturation of flavanone to flavone is catalyzed by a new type of flavone synthase, the flavin mononucleotide (FMN)-dependent oxidoreductase cfoJ. Monooxygenases cfoF, cfoG, and P450 cfoH are responsible for the hydroxylation of the flavonoid skeleton at sites C3, C8, and C2', respectively. Like cfoF, the dehydratase cfoI plays also a role in the hydroxylation of position C3. Methyltransferases cfoB, cfoC, and cfoD then catalyze the methylation of C7-OH, C8-OH, and C3-OH, respectively. Finally, the monooxygenase cfoE is responsible for the chlorination of flavonoid at position C3'. In Aspergillus candidus, this protein is Chalcone synthase cfoA.